We begin with the raw amino-acid sequence, 608 residues long: DNA mismatch repair protein MutL (608 aa).

It belongs to the DNA mismatch repair MutL/HexB family.

Its function is as follows. This protein is involved in the repair of mismatches in DNA. It is required for dam-dependent methyl-directed DNA mismatch repair. May act as a 'molecular matchmaker', a protein that promotes the formation of a stable complex between two or more DNA-binding proteins in an ATP-dependent manner without itself being part of a final effector complex. The chain is DNA mismatch repair protein MutL from Anaeromyxobacter dehalogenans (strain 2CP-C).